The following is an 89-amino-acid chain: Putative defensin-like protein 89 (89 aa).

A signal peptide spans 1 to 25 (MGFKNNLSLVSVMVFALILLPMISG). Cystine bridges form between C30–C66, C36–C57, C42–C64, and C46–C65.

This sequence belongs to the DEFL family.

It is found in the secreted. The sequence is that of Putative defensin-like protein 89 from Arabidopsis thaliana (Mouse-ear cress).